A 112-amino-acid chain; its full sequence is uncharacterized protein (112 aa).

The helical transmembrane segment at 75 to 95 (ILGVFGGFIYILTPLPIVSGF) threads the bilayer.

Its subcellular location is the membrane. This is an uncharacterized protein from Methanocaldococcus jannaschii (strain ATCC 43067 / DSM 2661 / JAL-1 / JCM 10045 / NBRC 100440) (Methanococcus jannaschii).